The sequence spans 521 residues: Bacillolysin (521 aa).

The N-terminal stretch at 1-27 is a signal peptide; the sequence is MGLGKKLSVAVAASFMSLSISLPGVQA. The propeptide at 28 to 221 is activation peptide; sequence AEGHQLKENQ…ILKQQNKVEH (194 aa). Asp-360 serves as a coordination point for Ca(2+). His-364 is a Zn(2+) binding site. Residue Glu-365 is part of the active site. His-368 and Glu-388 together coordinate Zn(2+). Positions 399, 402, 404, and 407 each coordinate Ca(2+). The active-site Proton donor is His-449.

Belongs to the peptidase M4 family. Requires Ca(2+) as cofactor. Zn(2+) is required as a cofactor.

Its subcellular location is the secreted. It catalyses the reaction Similar, but not identical, to that of thermolysin.. Its function is as follows. Extracellular zinc metalloprotease. The sequence is that of Bacillolysin (nprE) from Bacillus subtilis subsp. amylosacchariticus.